Consider the following 1442-residue polypeptide: ABC transporter G family member 11 (1442 aa).

The ABC transporter 1 domain occupies 125–373; the sequence is LFTPSFWTKK…FMSLGFDCEP (249 aa). The ABC transmembrane type-2 1 domain occupies 478–718; the sequence is LNDKFGMYSK…EQGSLYFKGD (241 aa). 6 helical membrane passes run 482–502, 518–538, 567–587, 592–612, 627–647, and 737–757; these read FGMYSKYLSVLIQGFVYASLF, AILSAVIFNAFLSIGEMAMTF, IPFTAIQVFLFSIIAYFMFGL, GKFFIFCFTLLGASLACTALF, NISNVFIIFMLTYSGYTIPIP, and IIVYCWWVFFVVCNMFAMEYI. The 245-residue stretch at 808–1052 folds into the ABC transporter 2 domain; that stretch reads FTWQNIRYTV…LTSYFERHGV (245 aa). An ATP-binding site is contributed by 844-851; sequence GSSGAGKT. In terms of domain architecture, ABC transmembrane type-2 2 spans 1144–1369; it reads YYTYGSFVQA…YNTCQNYTSA (226 aa). The next 6 helical transmembrane spans lie at 1147–1167, 1181–1201, 1220–1240, 1259–1279, 1286–1306, and 1416–1436; these read YGSFVQAALCGLIIGFTFWNL, IFEALMLGILLIFVVMPQLII, FAISIVVVELPFIVISGTIFF, FYFWFIFIIFMFFCVSFGQAV, MFFAMTLIPLLIVFLFLFCGV, and VGIIIGFFVFNILMVILFVYL.

It belongs to the ABC transporter superfamily. ABCG family. PDR (TC 3.A.1.205) subfamily.

The protein localises to the membrane. This Dictyostelium discoideum (Social amoeba) protein is ABC transporter G family member 11 (abcG11).